The sequence spans 206 residues: Thymidylate kinase (206 aa).

11 to 18 is a binding site for ATP; it reads GPEGAGKT.

The protein belongs to the thymidylate kinase family.

The enzyme catalyses dTMP + ATP = dTDP + ADP. In terms of biological role, phosphorylation of dTMP to form dTDP in both de novo and salvage pathways of dTTP synthesis. The polypeptide is Thymidylate kinase (tmk) (Deinococcus radiodurans (strain ATCC 13939 / DSM 20539 / JCM 16871 / CCUG 27074 / LMG 4051 / NBRC 15346 / NCIMB 9279 / VKM B-1422 / R1)).